We begin with the raw amino-acid sequence, 122 residues long: Large ribosomal subunit protein uL14 (122 aa).

The protein belongs to the universal ribosomal protein uL14 family. As to quaternary structure, part of the 50S ribosomal subunit. Forms a cluster with proteins L3 and L19. In the 70S ribosome, L14 and L19 interact and together make contacts with the 16S rRNA in bridges B5 and B8.

Binds to 23S rRNA. Forms part of two intersubunit bridges in the 70S ribosome. The sequence is that of Large ribosomal subunit protein uL14 from Rickettsia africae (strain ESF-5).